The sequence spans 209 residues: Probable transcriptional regulator ycf29 (209 aa).

Residues 4 to 120 (NLMLVENDTV…ELVSLIKNLI (117 aa)) form the Response regulatory domain. Asp-53 bears the 4-aspartylphosphate mark. The HTH luxR-type domain occupies 139 to 204 (PLFQLLYLTP…LLVKYSIKNN (66 aa)).

It is found in the plastid. It localises to the chloroplast. The chain is Probable transcriptional regulator ycf29 (ycf29) from Porphyra purpurea (Red seaweed).